The primary structure comprises 125 residues: Hydrogenase maturation factor HypA (125 aa).

Histidine 2 provides a ligand contact to Ni(2+). Zn(2+) is bound by residues cysteine 73, cysteine 76, cysteine 96, and cysteine 99.

It belongs to the HypA/HybF family.

Involved in the maturation of [NiFe] hydrogenases. Required for nickel insertion into the metal center of the hydrogenase. The sequence is that of Hydrogenase maturation factor HypA from Methanobrevibacter smithii (strain ATCC 35061 / DSM 861 / OCM 144 / PS).